We begin with the raw amino-acid sequence, 407 residues long: MLDPLDILTNIDDVLPYYQAIFSAEEQKVVGYEVLGRILADSEIQSLGPFFLDAGIPEEYKLEVDNRIIRQALDRFLEADSDLLIFMNQDANLLMLDHGESFLELLKEYEAKGIELHRFVLEITEHNFEGDIEQLYHMLAYYRTYGIKIAVDNIGKESSNLDRIALLSPDLLKIDLQALKVSQPSPSYEHVLYSISLLARKIGAALLYEDIEANFQLQYAWRNGGRYFQGYYLVSPSETFLERDVLKQRLKTEFHQFITHEKKKLETVYEHSEQFYKRVHQAVTSLRKNNLSSDDDFIKKLAEELTDCSFRIYMCDEEGDQLTGNVFKQDGEWIYQPEYAEKNWSWRPYFLENIMRMRNLRKGFFSDLYSDLETGEMIRTFSYPMDDQMYLFIDLPYSYLYEQDGLI.

In terms of domain architecture, EAL spans 1–250; sequence MLDPLDILTN…LERDVLKQRL (250 aa).

This is an uncharacterized protein from Bacillus subtilis (strain 168).